The sequence spans 166 residues: Gem-associated protein 6 (166 aa).

Positions 4 to 73 constitute a Sm domain; it reads WMKKGPLEWQ…VQTVEIVNEG (70 aa). Residues 68–166 enclose the AD domain; that stretch reads EIVNEGDHSV…LIQGHLEASQ (99 aa). 2 positions are modified to phosphoserine: serine 94 and serine 165.

In terms of assembly, part of the core SMN complex that contains SMN1, GEMIN2/SIP1, DDX20/GEMIN3, GEMIN4, GEMIN5, GEMIN6, GEMIN7, GEMIN8 and STRAP/UNRIP. Part of the SMN-Sm complex that contains SMN1, GEMIN2/SIP1, DDX20/GEMIN3, GEMIN4, GEMIN5, GEMIN6, GEMIN7, GEMIN8, STRAP/UNRIP and the Sm proteins SNRPB, SNRPD1, SNRPD2, SNRPD3, SNRPE, SNRPF and SNRPG. Interacts with GEMIN7; the interaction is direct. Interacts with GEMIN8; the interaction is direct. Interacts with SNRPB, SNRPD2, SNRPD3 and SNRPE; the interaction is direct.

It is found in the nucleus. Its subcellular location is the nucleoplasm. The protein resides in the gem. The protein localises to the cytoplasm. Its function is as follows. The SMN complex catalyzes the assembly of small nuclear ribonucleoproteins (snRNPs), the building blocks of the spliceosome, and thereby plays an important role in the splicing of cellular pre-mRNAs. Most spliceosomal snRNPs contain a common set of Sm proteins SNRPB, SNRPD1, SNRPD2, SNRPD3, SNRPE, SNRPF and SNRPG that assemble in a heptameric protein ring on the Sm site of the small nuclear RNA to form the core snRNP (Sm core). In the cytosol, the Sm proteins SNRPD1, SNRPD2, SNRPE, SNRPF and SNRPG are trapped in an inactive 6S pICln-Sm complex by the chaperone CLNS1A that controls the assembly of the core snRNP. To assemble core snRNPs, the SMN complex accepts the trapped 5Sm proteins from CLNS1A forming an intermediate. Binding of snRNA inside 5Sm triggers eviction of the SMN complex, thereby allowing binding of SNRPD3 and SNRPB to complete assembly of the core snRNP. The sequence is that of Gem-associated protein 6 (GEMIN6) from Bos taurus (Bovine).